Reading from the N-terminus, the 596-residue chain is MDSPLSSLSFTNTLSGKRNVLRPAARELKLMSDRNANQELDFFFPKSKHIASTLVDPFGKTCSTASPASSLAADMSMNMHIDESPALPTPRRTLFRSLSCTVETPLANKTIVSPLPESPSNDALTESYFFRQPASKYSITQDSPRVSSTIAYSFKPKASIALNTTKSEATRSSLSSSSFDSYLRPNVSRSRSSGNAPPFLRSRSSSSYSINKKKGTSGGQATRHLTYALSRTCSQSSNTTSLLESCLTDDTDDFELMSDHEDTFTMGKVADLPESSVELVEDAASIQRPNSDFGACNDNSLDDLFQASPIKPIDMLPKINKDIAFPSLKVRSPSPMAFAMQEDAEYDEQDTPVLRRTQSMFLNSTRLGLFKSQDLVCVTPKQSTKESERFISSHVEDLSLPCFAVKEDSLKRITQETLLGLLDGKFKDIFDKCIIIDCRFEYEYLGGHISTAVNLNTKQAIVDAFLSKPLTHRVALVFHCEHSAHRAPHLALHFRNTDRRMNSHRYPFLYYPEVYILHGGYKSFYENHKNRCDPINYVPMNDASHVMTCTKAMNNFKRNATFMRTKSYTFGQSVLASPDVNDSPTAMHSLSTLRRF.

Phosphoserine is present on residues serine 99 and serine 178. A disordered region spans residues 174–221 (LSSSSFDSYLRPNVSRSRSSGNAPPFLRSRSSSSYSINKKKGTSGGQA). The region spanning 429 to 533 (IFDKCIIIDC…FYENHKNRCD (105 aa)) is the Rhodanese domain. The Phosphocysteine intermediate role is filled by cysteine 480.

It belongs to the MPI phosphatase family. Interacts with rad24 during G2 in a srk1-dependent manner; the interaction is increased during osmostress. Post-translationally, phosphorylated by srk1 in the N-terminus; phosphorylation promotes nuclear exclusion.

It localises to the cytoplasm. The protein resides in the nucleus. The enzyme catalyses O-phospho-L-tyrosyl-[protein] + H2O = L-tyrosyl-[protein] + phosphate. In terms of biological role, tyrosine protein phosphatase which functions as a dosage-dependent inducer of mitotic and meiotic progression. Directly dephosphorylates cdc2 and stimulates its kinase activity. Required for the G2/M transition of the cell cycle. Required for induction of meiosis II. This is M-phase inducer phosphatase from Schizosaccharomyces pombe (strain 972 / ATCC 24843) (Fission yeast).